Here is a 201-residue protein sequence, read N- to C-terminus: Oligoribonuclease (201 aa).

An Exonuclease domain is found at 20-183 (LVWLDMEMTG…ADIHESIDEL (164 aa)). Tyr141 is a catalytic residue.

The protein belongs to the oligoribonuclease family.

Its subcellular location is the cytoplasm. 3'-to-5' exoribonuclease specific for small oligoribonucleotides. The polypeptide is Oligoribonuclease (Burkholderia mallei (strain NCTC 10229)).